The chain runs to 503 residues: Cytochrome P450 11B1, mitochondrial (503 aa).

Residues 1-24 (MAIWAKAEAWLAGPWLALNRARTL) constitute a mitochondrion transit peptide. C450 serves as a coordination point for heme.

The protein belongs to the cytochrome P450 family. Requires heme as cofactor.

It localises to the mitochondrion inner membrane. The catalysed reaction is a steroid + 2 reduced [adrenodoxin] + O2 + 2 H(+) = an 11beta-hydroxysteroid + 2 oxidized [adrenodoxin] + H2O. It carries out the reaction 11-deoxycortisol + 2 reduced [adrenodoxin] + O2 + 2 H(+) = cortisol + 2 oxidized [adrenodoxin] + H2O. The enzyme catalyses 21-hydroxyprogesterone + 2 reduced [adrenodoxin] + O2 + 2 H(+) = corticosterone + 2 oxidized [adrenodoxin] + H2O. It catalyses the reaction corticosterone + 2 reduced [adrenodoxin] + O2 + 2 H(+) = 18-hydroxycorticosterone + 2 oxidized [adrenodoxin] + H2O. The catalysed reaction is 18-hydroxycorticosterone + 2 reduced [adrenodoxin] + O2 + 2 H(+) = aldosterone + 2 oxidized [adrenodoxin] + 2 H2O. It carries out the reaction 21-hydroxyprogesterone + 2 reduced [adrenodoxin] + O2 + 2 H(+) = 19-hydroxy-11-deoxycorticosterone + 2 oxidized [adrenodoxin] + H2O. The enzyme catalyses 19-hydroxy-11-deoxycorticosterone + 2 reduced [adrenodoxin] + O2 + 2 H(+) = 19-oxo-11-deoxycorticosterone + 2 oxidized [adrenodoxin] + 2 H2O. The protein operates within steroid biosynthesis; glucocorticoid biosynthesis. It participates in steroid hormone biosynthesis. In terms of biological role, a cytochrome P450 monooxygenase that catalyzes the biosynthesis of aldosterone and other adrenal corticoids. Differing from other species (such as human, rat and mice), it is able to catalyze three sequential oxidative reactions of 11-deoxycorticosterone (21-hydroxyprogesterone), namely 11-beta hydroxylation, followed by two successive oxidations at C18 yielding 18-hydroxy and then 18-oxo intermediates, and ending with the formation of aldosterone. Steroid 11beta, 18- and 19-hydroxylase. Mechanistically, uses molecular oxygen inserting one oxygen atom into a substrate and reducing the second into a water molecule. Two electrons are provided by NADPH via a two-protein mitochondrial transfer system comprising flavoprotein FDXR (adrenodoxin/ferredoxin reductase) and nonheme iron-sulfur protein FDX1 or FDX2 (adrenodoxin/ferredoxin). In Sus scrofa (Pig), this protein is Cytochrome P450 11B1, mitochondrial (CYP11B1).